We begin with the raw amino-acid sequence, 184 residues long: MFLPSVLAASNLVKVQPGLIFWTLVTFVIAAVVLKWKAWGPILSLVEEREKQIASSIESAKRERAEAEKLLADQKTAIAEARREAAEMMRRNTQEMEKFREELMAKSRKEAEELKLSARREIDEQKAKAIAEVRSMAVDLAMEVAGKLISERMDDSKQRALAEQFVQGLPLNSTSATGAVRRTA.

The chain crosses the membrane as a helical span at residues 15–34 (VQPGLIFWTLVTFVIAAVVL).

It belongs to the ATPase B chain family. In terms of assembly, F-type ATPases have 2 components, F(1) - the catalytic core - and F(0) - the membrane proton channel. F(1) has five subunits: alpha(3), beta(3), gamma(1), delta(1), epsilon(1). F(0) has three main subunits: a(1), b(2) and c(10-14). The alpha and beta chains form an alternating ring which encloses part of the gamma chain. F(1) is attached to F(0) by a central stalk formed by the gamma and epsilon chains, while a peripheral stalk is formed by the delta and b chains.

It is found in the cell inner membrane. Its function is as follows. F(1)F(0) ATP synthase produces ATP from ADP in the presence of a proton or sodium gradient. F-type ATPases consist of two structural domains, F(1) containing the extramembraneous catalytic core and F(0) containing the membrane proton channel, linked together by a central stalk and a peripheral stalk. During catalysis, ATP synthesis in the catalytic domain of F(1) is coupled via a rotary mechanism of the central stalk subunits to proton translocation. In terms of biological role, component of the F(0) channel, it forms part of the peripheral stalk, linking F(1) to F(0). This Myxococcus xanthus (strain DK1622) protein is ATP synthase subunit b.